Reading from the N-terminus, the 184-residue chain is ATP synthase subunit b, chloroplastic (184 aa).

Residues 27–49 (LATNLINLSVVLGVLIFFGKGVL) form a helical membrane-spanning segment.

This sequence belongs to the ATPase B chain family. In terms of assembly, F-type ATPases have 2 components, F(1) - the catalytic core - and F(0) - the membrane proton channel. F(1) has five subunits: alpha(3), beta(3), gamma(1), delta(1), epsilon(1). F(0) has four main subunits: a(1), b(1), b'(1) and c(10-14). The alpha and beta chains form an alternating ring which encloses part of the gamma chain. F(1) is attached to F(0) by a central stalk formed by the gamma and epsilon chains, while a peripheral stalk is formed by the delta, b and b' chains.

Its subcellular location is the plastid. It is found in the chloroplast thylakoid membrane. In terms of biological role, f(1)F(0) ATP synthase produces ATP from ADP in the presence of a proton or sodium gradient. F-type ATPases consist of two structural domains, F(1) containing the extramembraneous catalytic core and F(0) containing the membrane proton channel, linked together by a central stalk and a peripheral stalk. During catalysis, ATP synthesis in the catalytic domain of F(1) is coupled via a rotary mechanism of the central stalk subunits to proton translocation. Its function is as follows. Component of the F(0) channel, it forms part of the peripheral stalk, linking F(1) to F(0). The polypeptide is ATP synthase subunit b, chloroplastic (Lactuca sativa (Garden lettuce)).